A 704-amino-acid chain; its full sequence is Protein NBR1 homolog (704 aa).

Methionine 1 is modified (N-acetylmethionine). In terms of domain architecture, PB1 spans 7-92 (ALVVKVSYGG…KFLKINVNAG (86 aa)). 3 stretches are compositionally biased toward polar residues: residues 95-108 (TNSAAPESSGSSTP), 171-189 (PQESSPCSPVTKPGSSGAS), and 223-233 (HSKTSGHVPNS). 2 disordered regions span residues 95–114 (TNSAAPESSGSSTPAGMPNP) and 171–233 (PQES…VPNS). The segment at 286–336 (HKGIRCDGCGVLPITGPRFKSKVKEDYDLCTICYSVMGNEGDYTRMDKPVS) adopts a ZZ-type; degenerate zinc-finger fold. Zn(2+) contacts are provided by cysteine 291, cysteine 294, cysteine 315, and cysteine 318. The UBA domain maps to 657–701 (GVSEWDPILEELQEMGFCDDVTNKRLLKKNNGSIKGVVMDLLTGE). Positions 661-664 (WDPI) match the LIR motif.

In terms of assembly, homodimer. Interacts with ATG8A, ATG8B, ATG8C, ATG8D, ATG8F and ATG8I. Binds to ubiquitin.

The protein resides in the cytoplasm. It is found in the vacuole. Its function is as follows. Autophagic substrate degraded in the vacuole by non-selective autophagy. Requires ATG8 protein expression to be recognized as an autophagic substrate. Acts probably as a receptor for autophagosomal degradation of ubiquitinated proteins. Targets ubiquitinated protein aggregates derived from denatured or damaged non-native proteins generated under stress conditions. Functions additively with the E3 ubiquitin-protein ligase CHIP for autophagosomal degradation of proteotoxic aggregates formed under stress conditions. The chain is Protein NBR1 homolog from Arabidopsis thaliana (Mouse-ear cress).